The chain runs to 152 residues: Transcriptional regulator MraZ (152 aa).

SpoVT-AbrB domains lie at 7–51 and 89–132; these read KERH…APDR and LEMV…DPQR.

It belongs to the MraZ family. In terms of assembly, forms oligomers.

The protein resides in the cytoplasm. It localises to the nucleoid. The protein is Transcriptional regulator MraZ of Pelodictyon phaeoclathratiforme (strain DSM 5477 / BU-1).